Reading from the N-terminus, the 94-residue chain is Small ribosomal subunit protein bS18 (94 aa).

The protein belongs to the bacterial ribosomal protein bS18 family. As to quaternary structure, part of the 30S ribosomal subunit. Forms a tight heterodimer with protein bS6.

Its function is as follows. Binds as a heterodimer with protein bS6 to the central domain of the 16S rRNA, where it helps stabilize the platform of the 30S subunit. The protein is Small ribosomal subunit protein bS18 of Acetivibrio thermocellus (strain ATCC 27405 / DSM 1237 / JCM 9322 / NBRC 103400 / NCIMB 10682 / NRRL B-4536 / VPI 7372) (Clostridium thermocellum).